The primary structure comprises 203 residues: E3 ubiquitin-protein ligase RNF152 (203 aa).

Residues 12–55 form an RING-type zinc finger; the sequence is CQICFNYYSPRRRPKLLDCKHTCCSVCLQQMRTSQKDLRCPWCR. A helical membrane pass occupies residues 167-187; that stretch reads SGVCTVILVACVLVFLLGIVL.

The protein belongs to the RNF152 family.

Its subcellular location is the lysosome membrane. The catalysed reaction is S-ubiquitinyl-[E2 ubiquitin-conjugating enzyme]-L-cysteine + [acceptor protein]-L-lysine = [E2 ubiquitin-conjugating enzyme]-L-cysteine + N(6)-ubiquitinyl-[acceptor protein]-L-lysine.. It functions in the pathway protein modification; protein ubiquitination. Functionally, E3 ubiquitin-protein ligase that acts as a negative regulator of mTORC1 signaling by mediating ubiquitination of RagA/RRAGA and RHEB. Catalyzes 'Lys-63'-linked polyubiquitination of RagA/RRAGA in response to amino acid starvation, thereby regulating mTORC1 signaling. Also mediates monoubiquitination of RHEB, promoting its association with the TSC-TBC complex and subsequent inhibition. Also mediates 'Lys-48'-linked polyubiquitination of target proteins and their subsequent targeting to the proteasome for degradation. In Gallus gallus (Chicken), this protein is E3 ubiquitin-protein ligase RNF152.